The sequence spans 105 residues: Flower-specific defensin (105 aa).

A signal peptide spans 1–25 (MARSLCFMAFAILAMMLFVAYEVQA). 4 cysteine pairs are disulfide-bonded: Cys-28-Cys-72, Cys-39-Cys-59, Cys-45-Cys-66, and Cys-49-Cys-68. Positions 73-105 (VFDEKMTKTGAEILAEEAKTLAAALLEEEIMDN) are cleaved as a propeptide — removed in mature form.

The protein belongs to the DEFL family. Most abundant in the epidermal cell layers of the petals and sepals, within the connective cells of the anthers, and the cortical cells of the style. Not detected in the tapetum, pollen mother cells, the transmitting tissue, the vascular bundles of the anther and style or in leaves. Expressed also in ovaries, but barley detectable in roots.

The protein localises to the secreted. It is found in the vacuole. Its function is as follows. Plant defense peptide with antifungal activity against F.oxysporum and B.cinerea. Retards the growth of the Lepidopteran insect pests H.armigera and H.punctigera. The sequence is that of Flower-specific defensin (D1) from Nicotiana alata (Winged tobacco).